Reading from the N-terminus, the 318-residue chain is Methionyl-tRNA formyltransferase (318 aa).

(6S)-5,6,7,8-tetrahydrofolate is bound at residue 110-113 (SLLP).

It belongs to the Fmt family.

It carries out the reaction L-methionyl-tRNA(fMet) + (6R)-10-formyltetrahydrofolate = N-formyl-L-methionyl-tRNA(fMet) + (6S)-5,6,7,8-tetrahydrofolate + H(+). In terms of biological role, attaches a formyl group to the free amino group of methionyl-tRNA(fMet). The formyl group appears to play a dual role in the initiator identity of N-formylmethionyl-tRNA by promoting its recognition by IF2 and preventing the misappropriation of this tRNA by the elongation apparatus. The sequence is that of Methionyl-tRNA formyltransferase from Lacticaseibacillus paracasei (strain ATCC 334 / BCRC 17002 / CCUG 31169 / CIP 107868 / KCTC 3260 / NRRL B-441) (Lactobacillus paracasei).